A 163-amino-acid polypeptide reads, in one-letter code: 3-dehydroquinate dehydratase (163 aa).

Tyrosine 28 acts as the Proton acceptor in catalysis. Substrate-binding residues include asparagine 80, histidine 86, and aspartate 93. Histidine 106 functions as the Proton donor in the catalytic mechanism. Substrate contacts are provided by residues 107–108 and arginine 117; that span reads IS.

The protein belongs to the type-II 3-dehydroquinase family. In terms of assembly, homododecamer.

It carries out the reaction 3-dehydroquinate = 3-dehydroshikimate + H2O. It functions in the pathway metabolic intermediate biosynthesis; chorismate biosynthesis; chorismate from D-erythrose 4-phosphate and phosphoenolpyruvate: step 3/7. Functionally, catalyzes a trans-dehydration via an enolate intermediate. The protein is 3-dehydroquinate dehydratase of Bradyrhizobium sp. (strain BTAi1 / ATCC BAA-1182).